Reading from the N-terminus, the 496-residue chain is Legumin (496 aa).

Positions 1 to 21 (MAKLLALSLSFCFLLFGTCFA) are cleaved as a signal peptide. Cystine bridges form between C31-C64 and C107-C318. The region spanning 36–230 (LNALKPDNRI…ALNVNRRIVN (195 aa)) is the Cupin type-1 1 domain. The tract at residues 240-311 (EKGAIVKVKG…RGGSKSQRDN (72 aa)) is disordered. Basic and acidic residues predominate over residues 257 to 269 (PEKEPRQKRGSRQ). The Cupin type-1 2 domain occupies 324–453 (QNIGSSSSPD…INVCQKKLLQ (130 aa)).

This sequence belongs to the 11S seed storage protein (globulins) family. In terms of assembly, hexamer; each subunit is composed of an acidic and a basic chain derived from a single precursor and linked by a disulfide bond.

Functionally, seed storage protein. Alpha-amylase inhibitor. This is Legumin from Cicer arietinum (Chickpea).